The primary structure comprises 885 residues: Translation initiation factor IF-2 (885 aa).

2 disordered regions span residues 55 to 150 (IPDK…ADVT) and 269 to 300 (NTIN…EAVT). Positions 65–146 (EPKAKKEPKK…AEAPKPKESL (82 aa)) are enriched in basic and acidic residues. Residues 281 to 290 (RRARKKHKKP) show a composition bias toward basic residues. Positions 384–553 (PRAPVITIMG…LLQADLLELK (170 aa)) constitute a tr-type G domain. A G1 region spans residues 393–400 (GHVDHGKT). 393-400 (GHVDHGKT) is a GTP binding site. The tract at residues 418–422 (GITQH) is G2. Residues 439 to 442 (DTPG) are G3. Residues 439 to 443 (DTPGH) and 493 to 496 (NKMD) contribute to the GTP site. The interval 493–496 (NKMD) is G4. Positions 529 to 531 (SAK) are G5.

Belongs to the TRAFAC class translation factor GTPase superfamily. Classic translation factor GTPase family. IF-2 subfamily.

It is found in the cytoplasm. Its function is as follows. One of the essential components for the initiation of protein synthesis. Protects formylmethionyl-tRNA from spontaneous hydrolysis and promotes its binding to the 30S ribosomal subunits. Also involved in the hydrolysis of GTP during the formation of the 70S ribosomal complex. The sequence is that of Translation initiation factor IF-2 from Campylobacter concisus (strain 13826).